A 391-amino-acid chain; its full sequence is Phosphoglycerate kinase (391 aa).

Substrate contacts are provided by residues 21-23 (DLN), Arg-36, 59-62 (HLGR), Arg-113, and Arg-146. ATP-binding positions include Lys-197, Glu-319, and 345-348 (GGDT).

This sequence belongs to the phosphoglycerate kinase family. In terms of assembly, monomer.

Its subcellular location is the cytoplasm. It catalyses the reaction (2R)-3-phosphoglycerate + ATP = (2R)-3-phospho-glyceroyl phosphate + ADP. The protein operates within carbohydrate degradation; glycolysis; pyruvate from D-glyceraldehyde 3-phosphate: step 2/5. The chain is Phosphoglycerate kinase from Pseudoalteromonas translucida (strain TAC 125).